We begin with the raw amino-acid sequence, 380 residues long: Cyclohexane-1-carbonyl-CoA dehydrogenase (380 aa).

It belongs to the acyl-CoA dehydrogenase family. Homotetramer. The cofactor is FAD.

It carries out the reaction cyclohexane-1-carbonyl-CoA + oxidized [electron-transfer flavoprotein] + H(+) = cyclohex-1-ene-1-carbonyl-CoA + reduced [electron-transfer flavoprotein]. Functionally, acyl-CoA dehydrogenase involved in the anaerobic degradation of cyclohexane carboxylic acid (CHC). Catalyzes the 1,2-dehydrogenation of cyclohexane-1-carbonyl-CoA (CHCoA) to cyclohex-1-ene-1-carbonyl-CoA (CHeneCoA). An alternative substrate, cyclohex-3-ene-1-carboxyl-CoA can be converted to the corresponding cyclohexadiene-1-carboxyl-CoA isomers (30% rate compared to CHC). The polypeptide is Cyclohexane-1-carbonyl-CoA dehydrogenase (Geobacter metallireducens (strain ATCC 53774 / DSM 7210 / GS-15)).